A 1092-amino-acid polypeptide reads, in one-letter code: Rho GTPase-activating protein 7 (1092 aa).

An SAM domain is found at 11 to 78; it reads LTQIEAKEAC…LNKCAVMKLE (68 aa). Residues Ser-86, Ser-89, and Ser-129 each carry the phosphoserine modification. 4 disordered regions span residues 121-179, 297-330, 409-434, and 492-553; these read PKQD…DATT, RSVS…TRSL, GPGH…NSSS, and SDEG…SGVG. The segment covering 130–143 has biased composition (polar residues); sequence PDNSRLQSATSHES. Low complexity-rich tracts occupy residues 154 to 174 and 299 to 325; these read VASV…AAHS and VSNS…SPVT. Residues 275-448 are focal adhesion-targeting (FAT); that stretch reads QLNCVEISAL…RLSIYDNVPG (174 aa). Phosphoserine is present on Ser-322. The segment covering 415–426 has biased composition (basic and acidic residues); that stretch reads LRRENSHDSPKE. The span at 500-512 shows a compositional bias: polar residues; sequence ALDSVSPCPSSPK. Residues 514–526 show a composition bias toward basic and acidic residues; that stretch reads IHLDVDHDRRTPS. A compositionally biased stretch (polar residues) spans 527-536; the sequence is DLDSTGNSLN. Residues 615 to 637 are polybasic cluster (PBR); the sequence is KHGFSWAVPKFMKRIKVPDYKDR. In terms of domain architecture, Rho-GAP spans 642–848; sequence VPLTVNVQRS…HMIAECKKLF (207 aa). In terms of domain architecture, START spans 878–1085; that stretch reads NSDQPADYRH…RDSFSNQNTE (208 aa).

As to quaternary structure, interacts with EF1A1, facilitates EF1A1 distribution to the membrane periphery and ruffles upon growth factor stimulation and suppresses cell migration. Interacts with tensin TNS1 (via N-terminus); the interaction is decreased by phosphorylation of TNS1. Interacts with TNS3 and PTEN; in resting cells, interacts with TNS3 (via C2 tensin-type domain) but, following growth factor stimulation, TNS3 and PTEN are phosphorylated which leads to weakened interaction with TNS3 and enhanced interaction with PTEN. Interacts (via C-terminus) with tensin TNS4 (via SH2 domain); the interaction is independent of tyrosine phosphorylation of DLC1. In terms of tissue distribution, widely expressed with the highest levels in heart, liver and lung.

The protein resides in the cytoplasm. It localises to the cell junction. Its subcellular location is the focal adhesion. The protein localises to the membrane. In terms of biological role, functions as a GTPase-activating protein for the small GTPases RHOA, RHOB, RHOC and CDC42, terminating their downstream signaling. This induces morphological changes and detachment through cytoskeletal reorganization, playing a critical role in biological processes such as cell migration and proliferation. Also functions in vivo as an activator of the phospholipase PLCD1. Active DLC1 increases cell migration velocity but reduces directionality. Required for growth factor-induced epithelial cell migration; in resting cells, interacts with TNS3 while PTEN interacts with the p85 regulatory subunit of the PI3K kinase complex but growth factor stimulation induces phosphorylation of TNS3 and PTEN, causing them to change their binding preference so that PTEN interacts with DLC1 and TNS3 interacts with p85. The PTEN-DLC1 complex translocates to the posterior of migrating cells to activate RHOA while the TNS3-p85 complex translocates to the leading edge of migrating cells to promote RAC1 activation. The protein is Rho GTPase-activating protein 7 (Dlc1) of Mus musculus (Mouse).